We begin with the raw amino-acid sequence, 479 residues long: Sulfate adenylyltransferase subunit 1 (479 aa).

The 215-residue stretch at 25 to 239 (KSLLRFLTCG…EVLETVDIQR (215 aa)) folds into the tr-type G domain. The interval 34–41 (GSVDDGKS) is G1. 34-41 (GSVDDGKS) contributes to the GTP binding site. The segment at 92 to 96 (GITID) is G2. The segment at 113–116 (DTPG) is G3. GTP is bound by residues 113–117 (DTPGH) and 168–171 (NKMD). The interval 168 to 171 (NKMD) is G4. A G5 region spans residues 206–208 (SAL).

Belongs to the TRAFAC class translation factor GTPase superfamily. Classic translation factor GTPase family. CysN/NodQ subfamily. Heterodimer composed of CysD, the smaller subunit, and CysN.

The enzyme catalyses sulfate + ATP + H(+) = adenosine 5'-phosphosulfate + diphosphate. The protein operates within sulfur metabolism; hydrogen sulfide biosynthesis; sulfite from sulfate: step 1/3. Functionally, with CysD forms the ATP sulfurylase (ATPS) that catalyzes the adenylation of sulfate producing adenosine 5'-phosphosulfate (APS) and diphosphate, the first enzymatic step in sulfur assimilation pathway. APS synthesis involves the formation of a high-energy phosphoric-sulfuric acid anhydride bond driven by GTP hydrolysis by CysN coupled to ATP hydrolysis by CysD. The chain is Sulfate adenylyltransferase subunit 1 from Salmonella dublin (strain CT_02021853).